The following is a 668-amino-acid chain: tRNA 5-methylaminomethyl-2-thiouridine biosynthesis bifunctional protein MnmC (668 aa).

Residues 1–245 form a tRNA (mnm(5)s(2)U34)-methyltransferase region; sequence MKHYAIQPAN…KREMLCGVME (245 aa). Positions 270-668 are FAD-dependent cmnm(5)s(2)U34 oxidoreductase; sequence IGGGIASALL…LLKGKAVKAG (399 aa).

This sequence in the N-terminal section; belongs to the methyltransferase superfamily. tRNA (mnm(5)s(2)U34)-methyltransferase family. In the C-terminal section; belongs to the DAO family. FAD is required as a cofactor.

It localises to the cytoplasm. It carries out the reaction 5-aminomethyl-2-thiouridine(34) in tRNA + S-adenosyl-L-methionine = 5-methylaminomethyl-2-thiouridine(34) in tRNA + S-adenosyl-L-homocysteine + H(+). Its function is as follows. Catalyzes the last two steps in the biosynthesis of 5-methylaminomethyl-2-thiouridine (mnm(5)s(2)U) at the wobble position (U34) in tRNA. Catalyzes the FAD-dependent demodification of cmnm(5)s(2)U34 to nm(5)s(2)U34, followed by the transfer of a methyl group from S-adenosyl-L-methionine to nm(5)s(2)U34, to form mnm(5)s(2)U34. This is tRNA 5-methylaminomethyl-2-thiouridine biosynthesis bifunctional protein MnmC from Escherichia coli O139:H28 (strain E24377A / ETEC).